The chain runs to 428 residues: 3-phosphoshikimate 1-carboxyvinyltransferase (428 aa).

K23, S24, and R28 together coordinate 3-phosphoshikimate. K23 lines the phosphoenolpyruvate pocket. Positions 97 and 125 each coordinate phosphoenolpyruvate. 3-phosphoshikimate is bound by residues S170, S171, Q172, S198, D314, N338, and K342. Residue Q172 participates in phosphoenolpyruvate binding. The active-site Proton acceptor is D314. R346, R388, and K413 together coordinate phosphoenolpyruvate.

The protein belongs to the EPSP synthase family. In terms of assembly, monomer.

Its subcellular location is the cytoplasm. It carries out the reaction 3-phosphoshikimate + phosphoenolpyruvate = 5-O-(1-carboxyvinyl)-3-phosphoshikimate + phosphate. It functions in the pathway metabolic intermediate biosynthesis; chorismate biosynthesis; chorismate from D-erythrose 4-phosphate and phosphoenolpyruvate: step 6/7. Functionally, catalyzes the transfer of the enolpyruvyl moiety of phosphoenolpyruvate (PEP) to the 5-hydroxyl of shikimate-3-phosphate (S3P) to produce enolpyruvyl shikimate-3-phosphate and inorganic phosphate. The polypeptide is 3-phosphoshikimate 1-carboxyvinyltransferase (Baumannia cicadellinicola subsp. Homalodisca coagulata).